Here is a 139-residue protein sequence, read N- to C-terminus: ATP synthase epsilon chain (139 aa).

This sequence belongs to the ATPase epsilon chain family. In terms of assembly, F-type ATPases have 2 components, CF(1) - the catalytic core - and CF(0) - the membrane proton channel. CF(1) has five subunits: alpha(3), beta(3), gamma(1), delta(1), epsilon(1). CF(0) has three main subunits: a, b and c.

It localises to the cell inner membrane. Produces ATP from ADP in the presence of a proton gradient across the membrane. The sequence is that of ATP synthase epsilon chain from Enterobacter sp. (strain 638).